Here is a 305-residue protein sequence, read N- to C-terminus: Oxygen-dependent coproporphyrinogen-III oxidase (305 aa).

Ser98 is a binding site for substrate. A divalent metal cation contacts are provided by His102 and His112. His112 serves as the catalytic Proton donor. 114–116 (NVR) is a binding site for substrate. Residues His151 and His181 each contribute to the a divalent metal cation site. The interval 246–281 (YVEFNLVYDRGTLFGLQSGGRTESILMSMPPLARWE) is important for dimerization. 264-266 (GGR) serves as a coordination point for substrate.

This sequence belongs to the aerobic coproporphyrinogen-III oxidase family. Homodimer. Requires a divalent metal cation as cofactor.

Its subcellular location is the cytoplasm. The catalysed reaction is coproporphyrinogen III + O2 + 2 H(+) = protoporphyrinogen IX + 2 CO2 + 2 H2O. Its pathway is porphyrin-containing compound metabolism; protoporphyrin-IX biosynthesis; protoporphyrinogen-IX from coproporphyrinogen-III (O2 route): step 1/1. Involved in the heme biosynthesis. Catalyzes the aerobic oxidative decarboxylation of propionate groups of rings A and B of coproporphyrinogen-III to yield the vinyl groups in protoporphyrinogen-IX. The chain is Oxygen-dependent coproporphyrinogen-III oxidase from Vibrio vulnificus (strain CMCP6).